Consider the following 473-residue polypeptide: Photosystem II CP43 reaction center protein (473 aa).

Residues 1–14 constitute a propeptide that is removed on maturation; that stretch reads MKTLYSLRRFYPVE. Position 15 is an N-acetylthreonine (threonine 15). Phosphothreonine is present on threonine 15. The next 5 membrane-spanning stretches (helical) occupy residues 69–93, 134–155, 178–200, 255–275, and 291–312; these read LFEVAHFVPEKPMYEQGLILLPHLA, LIGPETLEESLPFFGYVWKDRS, KALYFGGVYDTWAPGGGDVRKIT, KPFAWARRAFVWSGEAYLSYS, and WFNNTAYPSEFYGPTGPEASQA. Residue glutamate 367 coordinates [CaMn4O5] cluster. Residues 447 to 471 traverse the membrane as a helical segment; it reads RARAAAAGFEKGIDRDFEPVLSMNP.

This sequence belongs to the PsbB/PsbC family. PsbC subfamily. As to quaternary structure, PSII is composed of 1 copy each of membrane proteins PsbA, PsbB, PsbC, PsbD, PsbE, PsbF, PsbH, PsbI, PsbJ, PsbK, PsbL, PsbM, PsbT, PsbX, PsbY, PsbZ, Psb30/Ycf12, at least 3 peripheral proteins of the oxygen-evolving complex and a large number of cofactors. It forms dimeric complexes. Binds multiple chlorophylls and provides some of the ligands for the Ca-4Mn-5O cluster of the oxygen-evolving complex. It may also provide a ligand for a Cl- that is required for oxygen evolution. PSII binds additional chlorophylls, carotenoids and specific lipids. is required as a cofactor.

Its subcellular location is the plastid. It is found in the chloroplast thylakoid membrane. In terms of biological role, one of the components of the core complex of photosystem II (PSII). It binds chlorophyll and helps catalyze the primary light-induced photochemical processes of PSII. PSII is a light-driven water:plastoquinone oxidoreductase, using light energy to abstract electrons from H(2)O, generating O(2) and a proton gradient subsequently used for ATP formation. The protein is Photosystem II CP43 reaction center protein of Cycas taitungensis (Prince sago).